The following is a 1037-amino-acid chain: Glycine dehydrogenase (decarboxylating) 1, mitochondrial (1037 aa).

The N-terminal 67 residues, 1-67 (MERARRLAYR…AFGRHQQTRS (67 aa)), are a transit peptide targeting the mitochondrion. Cysteine 98 carries the post-translational modification S-glutathionyl cysteine; transient. S-glutathionyl cysteine is present on residues cysteine 402 and cysteine 463. Lysine 774 carries the N6-(pyridoxal phosphate)lysine modification. S-glutathionyl cysteine; transient occurs at positions 777, 943, and 1022.

It belongs to the GcvP family. As to quaternary structure, homodimer. The glycine cleavage system is composed of four proteins: P, T, L and H. The cofactor is pyridoxal 5'-phosphate. Glutathionylated at Cys-98, Cys-777, Cys-943 and Cys-1022 after S-nitrosoglutathione treatment. In terms of processing, S-nitrosylated at unknown positions by nitric oxide. In terms of tissue distribution, expressed in leaves. Detected in roots, stems, flowers and siliques.

The protein resides in the mitochondrion. The catalysed reaction is N(6)-[(R)-lipoyl]-L-lysyl-[glycine-cleavage complex H protein] + glycine + H(+) = N(6)-[(R)-S(8)-aminomethyldihydrolipoyl]-L-lysyl-[glycine-cleavage complex H protein] + CO2. With respect to regulation, inhibited by harpin, S-nitrosoglutathione (GSNO), nitric oxide, N-ethylmaleimide and 5,5'-dithiobis-(2-nitrobenzoic acid). Functionally, the glycine decarboxylase (GDC) or glycine cleavage system catalyzes the degradation of glycine. The P protein binds the alpha-amino group of glycine through its pyridoxal phosphate cofactor; CO(2) is released and the remaining methylamine moiety is then transferred to the lipoamide cofactor of the H protein. The polypeptide is Glycine dehydrogenase (decarboxylating) 1, mitochondrial (GLDP1) (Arabidopsis thaliana (Mouse-ear cress)).